Here is an 80-residue protein sequence, read N- to C-terminus: Transcription elongation factor 1 homolog (80 aa).

The Zn(2+) site is built by Cys25, Cys28, Cys49, and Cys52.

Belongs to the ELOF1 family.

The protein resides in the nucleus. In terms of biological role, transcription elongation factor implicated in the maintenance of proper chromatin structure in actively transcribed regions. In Encephalitozoon cuniculi (strain GB-M1) (Microsporidian parasite), this protein is Transcription elongation factor 1 homolog.